The sequence spans 932 residues: Isoleucine--tRNA ligase (932 aa).

The short motif at proline 59–histidine 69 is the 'HIGH' region element. Residue glutamate 562 participates in L-isoleucyl-5'-AMP binding. Residues lysine 603–serine 607 carry the 'KMSKS' region motif. Residue lysine 606 coordinates ATP. 4 residues coordinate Zn(2+): cysteine 899, cysteine 902, cysteine 915, and cysteine 918.

Belongs to the class-I aminoacyl-tRNA synthetase family. IleS type 1 subfamily. Monomer. Zn(2+) serves as cofactor.

Its subcellular location is the cytoplasm. It catalyses the reaction tRNA(Ile) + L-isoleucine + ATP = L-isoleucyl-tRNA(Ile) + AMP + diphosphate. Catalyzes the attachment of isoleucine to tRNA(Ile). As IleRS can inadvertently accommodate and process structurally similar amino acids such as valine, to avoid such errors it has two additional distinct tRNA(Ile)-dependent editing activities. One activity is designated as 'pretransfer' editing and involves the hydrolysis of activated Val-AMP. The other activity is designated 'posttransfer' editing and involves deacylation of mischarged Val-tRNA(Ile). The polypeptide is Isoleucine--tRNA ligase (Pasteurella multocida (strain Pm70)).